The following is a 431-amino-acid chain: Adenylosuccinate synthetase (431 aa).

GTP is bound by residues 13–19 (GDEGKGK) and 41–43 (GHT). The Proton acceptor role is filled by aspartate 14. Aspartate 14 and glycine 41 together coordinate Mg(2+). Residues 14-17 (DEGK), 39-42 (NAGH), threonine 130, arginine 144, glutamine 225, threonine 240, and arginine 304 each bind IMP. Histidine 42 acts as the Proton donor in catalysis. 300–306 (AVTGRPR) contacts substrate. Residues arginine 306, 332 to 334 (KLD), and 415 to 417 (STG) each bind GTP.

It belongs to the adenylosuccinate synthetase family. In terms of assembly, homodimer. Mg(2+) serves as cofactor.

The protein localises to the cytoplasm. It carries out the reaction IMP + L-aspartate + GTP = N(6)-(1,2-dicarboxyethyl)-AMP + GDP + phosphate + 2 H(+). The protein operates within purine metabolism; AMP biosynthesis via de novo pathway; AMP from IMP: step 1/2. Its function is as follows. Plays an important role in the de novo pathway of purine nucleotide biosynthesis. Catalyzes the first committed step in the biosynthesis of AMP from IMP. In Legionella pneumophila (strain Lens), this protein is Adenylosuccinate synthetase.